We begin with the raw amino-acid sequence, 311 residues long: tRNA-cytidine(32) 2-sulfurtransferase (311 aa).

Positions 47 to 52 (SGGKDS) match the PP-loop motif motif. Cysteine 122, cysteine 125, and cysteine 213 together coordinate [4Fe-4S] cluster.

Belongs to the TtcA family. In terms of assembly, homodimer. It depends on Mg(2+) as a cofactor. [4Fe-4S] cluster serves as cofactor.

The protein resides in the cytoplasm. The catalysed reaction is cytidine(32) in tRNA + S-sulfanyl-L-cysteinyl-[cysteine desulfurase] + AH2 + ATP = 2-thiocytidine(32) in tRNA + L-cysteinyl-[cysteine desulfurase] + A + AMP + diphosphate + H(+). The protein operates within tRNA modification. Catalyzes the ATP-dependent 2-thiolation of cytidine in position 32 of tRNA, to form 2-thiocytidine (s(2)C32). The sulfur atoms are provided by the cysteine/cysteine desulfurase (IscS) system. This Shigella boydii serotype 18 (strain CDC 3083-94 / BS512) protein is tRNA-cytidine(32) 2-sulfurtransferase.